Consider the following 301-residue polypeptide: MQDPGHLQGPPLALDPPRRQRQERTVYTESQQKVLEFYFQKDQYPNYDQRLNLAEMLSLREQQLQVWFKNRRAKLARERRLQQQPQRVPGQRGRGARAAPLVPVAAASFPGGPEFPQGRGSWISPQPGPWGVLPAAEPKIYSLPRTWGGPECGTQEGLKAVPAPGPGPIPAPIPGPAQIPGPVPGPAPNLGPMSGPLSVSIPGPIPAPISCPGPIPDPVLGRTLMPGPGSLPTPAPGALWPQSPYASNLSPDTQLYPDFTKLLPLLDRFEESSLSTTTSQYKEEDGFVDKNHSVPRSLLDL.

2 disordered regions span residues 1 to 27 and 273 to 301; these read MQDP…RTVY and SLST…LLDL. Basic and acidic residues-rich tracts occupy residues 16–26 and 281–292; these read PPRRQRQERTV and YKEEDGFVDKNH. Positions 20–79 form a DNA-binding region, homeobox; the sequence is QRQERTVYTESQQKVLEFYFQKDQYPNYDQRLNLAEMLSLREQQLQVWFKNRRAKLARER.

Belongs to the paired homeobox family.

The protein localises to the nucleus. In terms of biological role, transcription factor expressed after fertilization required for zygotic genome activation (ZGA), a critical event in early embryonic development during which the developmental control passes from maternally provided mRNAs to the expression of the zygotic genome after fertilization. Binds and activates expression of key ZGA marker genes, such as NANOGNB, ZSCAN4, DUXB, KLF5 and DPPA3. Binds to regulatory DNA sequences containing a 5'-TAATCC-3' sequence motif. This is Tetrapeptide repeat homeobox protein 2 from Homo sapiens (Human).